A 631-amino-acid polypeptide reads, in one-letter code: Phosphomethylpyrimidine synthase (631 aa).

Substrate is bound by residues asparagine 239, methionine 268, tyrosine 297, histidine 333, 353–355 (SRG), 394–397 (DGLR), and glutamate 433. Position 437 (histidine 437) interacts with Zn(2+). Residue tyrosine 460 coordinates substrate. Residue histidine 501 coordinates Zn(2+). [4Fe-4S] cluster-binding residues include cysteine 581, cysteine 584, and cysteine 589.

This sequence belongs to the ThiC family. Homodimer. Requires [4Fe-4S] cluster as cofactor.

It carries out the reaction 5-amino-1-(5-phospho-beta-D-ribosyl)imidazole + S-adenosyl-L-methionine = 4-amino-2-methyl-5-(phosphooxymethyl)pyrimidine + CO + 5'-deoxyadenosine + formate + L-methionine + 3 H(+). It participates in cofactor biosynthesis; thiamine diphosphate biosynthesis. Its function is as follows. Catalyzes the synthesis of the hydroxymethylpyrimidine phosphate (HMP-P) moiety of thiamine from aminoimidazole ribotide (AIR) in a radical S-adenosyl-L-methionine (SAM)-dependent reaction. This Salmonella paratyphi C (strain RKS4594) protein is Phosphomethylpyrimidine synthase.